A 348-amino-acid polypeptide reads, in one-letter code: Dihydroorotase (348 aa).

2 residues coordinate Zn(2+): H14 and H16. Substrate is bound by residues 16–18 (HLR) and N42. The Zn(2+) site is built by K100, H137, and H175. K100 bears the N6-carboxylysine mark. H137 is a binding site for substrate. Residue L220 participates in substrate binding. Zn(2+) is bound at residue D248. Residue D248 is part of the active site. The substrate site is built by H252 and A264.

It belongs to the metallo-dependent hydrolases superfamily. DHOase family. Class II DHOase subfamily. In terms of assembly, homodimer. Zn(2+) is required as a cofactor.

The enzyme catalyses (S)-dihydroorotate + H2O = N-carbamoyl-L-aspartate + H(+). It functions in the pathway pyrimidine metabolism; UMP biosynthesis via de novo pathway; (S)-dihydroorotate from bicarbonate: step 3/3. Its function is as follows. Catalyzes the reversible cyclization of carbamoyl aspartate to dihydroorotate. This Pseudomonas putida (strain ATCC 47054 / DSM 6125 / CFBP 8728 / NCIMB 11950 / KT2440) protein is Dihydroorotase.